We begin with the raw amino-acid sequence, 123 residues long: Small ribosomal subunit protein uS12c (123 aa).

It belongs to the universal ribosomal protein uS12 family. As to quaternary structure, part of the 30S ribosomal subunit.

It is found in the plastid. The protein resides in the chloroplast. In terms of biological role, with S4 and S5 plays an important role in translational accuracy. Located at the interface of the 30S and 50S subunits. This chain is Small ribosomal subunit protein uS12c (rps12), found in Chlorella vulgaris (Green alga).